A 307-amino-acid polypeptide reads, in one-letter code: tRNA dimethylallyltransferase (307 aa).

8–15 (GPTGSGKS) is a binding site for ATP. Residue 10-15 (TGSGKS) participates in substrate binding. The segment at 33–36 (DSLQ) is interaction with substrate tRNA.

It belongs to the IPP transferase family. Monomer. Requires Mg(2+) as cofactor.

The enzyme catalyses adenosine(37) in tRNA + dimethylallyl diphosphate = N(6)-dimethylallyladenosine(37) in tRNA + diphosphate. Catalyzes the transfer of a dimethylallyl group onto the adenine at position 37 in tRNAs that read codons beginning with uridine, leading to the formation of N6-(dimethylallyl)adenosine (i(6)A). This Solibacter usitatus (strain Ellin6076) protein is tRNA dimethylallyltransferase.